We begin with the raw amino-acid sequence, 500 residues long: Citrate lyase alpha chain (500 aa).

As to quaternary structure, oligomer with a subunit composition of (alpha,beta,gamma)6.

It localises to the cytoplasm. It catalyses the reaction citrate = oxaloacetate + acetate. The enzyme catalyses citrate + acetyl-CoA = (3S)-citryl-CoA + acetate. Represents a citrate:acetyl-ACP transferase. This is Citrate lyase alpha chain (citF) from Haemophilus influenzae (strain ATCC 51907 / DSM 11121 / KW20 / Rd).